The chain runs to 373 residues: MKVANGYEYTAIMEKIAPKKLAMEGDPIGLQVGDLSKKVRKVMFTLDVLEEVVDEAIEKRVDLIIAHHPFLYRPTQHIDTTTKQGKMIKKLIKHDITVFAAHTNLDIAQGGVNDILADLLHLQDTTMIEETYTEPYCKIAVYVPENELESVRLALVNNGAGQIGTNYTECTFHTTGIGSFKPGTDANPTIGEKETLTSIPEVKIEAIFPQYLTETITKAVKIAHPYEEPAIDVYTLETQTYKEGLGRVGTLPKKISMVSFIDKLKTAFAIDNVRFVGDLKANVQKVAIIGGDGNKFIHQAKATGADVFITGDVYYHTAHDLLAINLPTIDAGHNIEKVMKGYLKNKMEEQAKILDYEAEFIVSEVNTDPFQFC.

Residues H67, H68, D106, H333, and E336 each contribute to the a divalent metal cation site.

The protein belongs to the GTP cyclohydrolase I type 2/NIF3 family. As to quaternary structure, homohexamer.

The protein is GTP cyclohydrolase 1 type 2 homolog of Listeria innocua serovar 6a (strain ATCC BAA-680 / CLIP 11262).